The sequence spans 237 residues: Orotidine 5'-phosphate decarboxylase (237 aa).

Residues Asp10, Lys33, 60-69, Thr123, Arg185, Gln194, Gly214, and Arg215 each bind substrate; that span reads DLKLHDIPNT. Lys62 functions as the Proton donor in the catalytic mechanism.

The protein belongs to the OMP decarboxylase family. Type 1 subfamily. As to quaternary structure, homodimer.

The enzyme catalyses orotidine 5'-phosphate + H(+) = UMP + CO2. The protein operates within pyrimidine metabolism; UMP biosynthesis via de novo pathway; UMP from orotate: step 2/2. Its function is as follows. Catalyzes the decarboxylation of orotidine 5'-monophosphate (OMP) to uridine 5'-monophosphate (UMP). The protein is Orotidine 5'-phosphate decarboxylase of Enterococcus faecalis (strain ATCC 700802 / V583).